The following is an 82-amino-acid chain: Delta-actitoxin-Aeq2c (82 aa).

The signal sequence occupies residues 1–19; it reads MNRLMILVFAAVFLALASA. A propeptide spanning residues 20–26 is cleaved from the precursor; sequence DEDVDIA. Cystine bridges form between cysteine 32–cysteine 79, cysteine 34–cysteine 69, and cysteine 62–cysteine 80.

This sequence belongs to the sea anemone sodium channel inhibitory toxin family. Type I subfamily.

The protein localises to the secreted. Its subcellular location is the nematocyst. Functionally, binds specifically to voltage-gated sodium channels (Nav), thereby delaying their inactivation during signal transduction. Causes death to crabs. This Actinia equina (Beadlet anemone) protein is Delta-actitoxin-Aeq2c.